A 1017-amino-acid chain; its full sequence is Probable beta-galactosidase B (1017 aa).

Positions 1–20 (MTRITKLCVLLLSSIGLLAA) are cleaved as a signal peptide. N-linked (GlcNAc...) asparagine glycosylation occurs at Asn-23. Residue Tyr-90 coordinates substrate. Asn-100 is a glycosylation site (N-linked (GlcNAc...) asparagine). Substrate contacts are provided by Asn-135, Ala-136, and Glu-137. The N-linked (GlcNAc...) asparagine glycan is linked to Asn-158. Asn-195 contacts substrate. Catalysis depends on Glu-196, which acts as the Proton donor. The N-linked (GlcNAc...) asparagine glycan is linked to Asn-211. Tyr-265 contacts substrate. Cys-271 and Cys-324 form a disulfide bridge. The active-site Nucleophile is the Glu-308. Tyr-373 serves as a coordination point for substrate. N-linked (GlcNAc...) asparagine glycans are attached at residues Asn-411, Asn-417, Asn-456, Asn-628, Asn-681, Asn-737, Asn-770, Asn-777, Asn-785, Asn-828, and Asn-829.

It belongs to the glycosyl hydrolase 35 family.

It is found in the secreted. The catalysed reaction is Hydrolysis of terminal non-reducing beta-D-galactose residues in beta-D-galactosides.. Its function is as follows. Cleaves beta-linked terminal galactosyl residues from gangliosides, glycoproteins, and glycosaminoglycans. This is Probable beta-galactosidase B (lacB) from Aspergillus niger (strain ATCC MYA-4892 / CBS 513.88 / FGSC A1513).